The primary structure comprises 434 residues: MAKTDLARRVYNHTWKLDPIIRSLLDTDFYKLLMLQMIWGLYPRVDATFSLINRTSSVRLADEIDEGELRAQLDHARTLRFSKKEMIWLAGNTFYGRKQIFQPEFLAWLHDCQLPEYELRRKDGQYELHFHGPWTHTTMWEIPALAIINELRSRAAMKNLGPFSLDVLYARAKAKMWSKVERLRQLPDLKISDFGTRRRHSFLWQRWCVEALKEGIGSAFTGTSNVLLAMDTDLEALGTNAHELPMVLAALAKTDDELRSAPYRVLQDWNRYYGGNLLIVLPDAFGTAAFLRNAPDWVADWTGFRPDSAPPIEGGERIIEWWKSKGKDPREKLLIFSDALDVDTIEETYRHFEGRVRMGFGWGTNLTNDFAGCAPQSIDGLKAISLVCKVTDANGHPAVKLSDNPQKATGDPKEVARYLRFFGNEERVEQLVRV.

Histidine 242 is subject to Phosphohistidine; by autocatalysis.

It belongs to the NAPRTase family. Transiently phosphorylated on a His residue during the reaction cycle. Phosphorylation strongly increases the affinity for substrates and increases the rate of nicotinate D-ribonucleotide production. Dephosphorylation regenerates the low-affinity form of the enzyme, leading to product release.

The catalysed reaction is nicotinate + 5-phospho-alpha-D-ribose 1-diphosphate + ATP + H2O = nicotinate beta-D-ribonucleotide + ADP + phosphate + diphosphate. Its pathway is cofactor biosynthesis; NAD(+) biosynthesis; nicotinate D-ribonucleotide from nicotinate: step 1/1. In terms of biological role, catalyzes the synthesis of beta-nicotinate D-ribonucleotide from nicotinate and 5-phospho-D-ribose 1-phosphate at the expense of ATP. In Brucella melitensis biotype 1 (strain ATCC 23456 / CCUG 17765 / NCTC 10094 / 16M), this protein is Nicotinate phosphoribosyltransferase.